Consider the following 430-residue polypeptide: Histidine--tRNA ligase (430 aa).

Belongs to the class-II aminoacyl-tRNA synthetase family. As to quaternary structure, homodimer.

It is found in the cytoplasm. It catalyses the reaction tRNA(His) + L-histidine + ATP = L-histidyl-tRNA(His) + AMP + diphosphate + H(+). This is Histidine--tRNA ligase from Anaplasma marginale (strain Florida).